The chain runs to 175 residues: MTLQITETYERLRASHISRWGIVQTTYPQNIAEHMWRVWLLCRDWGAAAGMPQHTVRQACEFALVHDLAEIRTGDAPTPHKTPELKELLAGIEAQIVPEVAELEATMAPEARELWKFCDTAEAVLFLKVNGLGAHAYDVQHLLMEQMKRRLMDSVLDVEVQDELMFQFERTIKKT.

R19 contributes to the dATP binding site. Co(2+) contacts are provided by H34, H66, D67, E70, D75, and D119.

The protein belongs to the Caudovirales dATP triphosphohydrolase family. As to quaternary structure, homohexamer. Co(2+) is required as a cofactor. Requires Zn(2+) as cofactor.

It carries out the reaction dATP + H2O = 2'-deoxyadenosine + triphosphate + H(+). The enzyme catalyses dADP + H2O = 2'-deoxyadenosine + diphosphate. It catalyses the reaction dAMP + H2O = 2'-deoxyadenosine + phosphate. Its function is as follows. Catalyzes the hydrolysis of dATP, dADP and dAMP into dA. This step is essential for Z-genome synthesis (containing aminoadenine instead of adenine). Specifically removes dATP and its precursor dADP from the nucleotide pool of the host, preventing the incorporation of A into the phage genome and favoring the integration of the Z-base into the viral genome. This chain is dATP triphosphohydrolase (datZ), found in Cyanophage S-2L (Cyanobacteria phage S-2L).